The primary structure comprises 235 residues: Peptidase E (235 aa).

Active-site charge relay system residues include Ser122, Asp137, and His159.

This sequence belongs to the peptidase S51 family.

The protein localises to the cytoplasm. The enzyme catalyses Dipeptidase E catalyzes the hydrolysis of dipeptides Asp-|-Xaa. It does not act on peptides with N-terminal Glu, Asn or Gln, nor does it cleave isoaspartyl peptides.. In terms of biological role, hydrolyzes dipeptides containing N-terminal aspartate residues. May play a role in allowing the cell to use peptide aspartate to spare carbon otherwise required for the synthesis of the aspartate family of amino acids. The protein is Peptidase E of Shewanella amazonensis (strain ATCC BAA-1098 / SB2B).